The primary structure comprises 366 residues: GTP-binding protein 10 (366 aa).

In terms of domain architecture, Obg spans 13-148; that stretch reads GNFIDNLRIF…RIVHLDLKVI (136 aa). An OBG-type G domain is found at 149–344; sequence ADVGLVGFPN…LKSCIRKALD (196 aa). GTP is bound by residues 155–162, 202–206, and 278–281; these read GFPNAGKS, DLPGL, and NKMD. Residues 346 to 355 are compositionally biased toward basic and acidic residues; that stretch reads QDGKESDAHR. Residues 346–366 are disordered; the sequence is QDGKESDAHRSKQLLNLQSSS.

It belongs to the TRAFAC class OBG-HflX-like GTPase superfamily. OBG GTPase family.

It is found in the nucleus. Its subcellular location is the nucleolus. In terms of biological role, may be involved in the ribosome maturation process. This chain is GTP-binding protein 10 (Gtpbp10), found in Mus musculus (Mouse).